Reading from the N-terminus, the 224-residue chain is Retinoschisin (224 aa).

Positions 1–23 are cleaved as a signal peptide; sequence MPHKIEGFFLLLLFGYEATLGLS. An F5/8 type C domain is found at 63 to 219; sequence CPYHKPLGFE…IAIRMELLEC (157 aa). Cystine bridges form between Cys-63–Cys-219 and Cys-110–Cys-142.

Homooctamer of 4 homodimers; disulfide-linked. The homooctamer has a flat, cogwheel structure with a diameter of about 14 nm. Two stacked octamers can assemble to form a hexadecamer. As to expression, detected in the eye cup. Detected in retina, in the inner segment of the photoreceptors, the inner nuclear layer, the inner plexiform layer and the ganglion cell layer (at protein level). Restricted to the retina. At the mRNA level, detected only within the photoreceptor cell layer, most prominently within the inner segments of the photoreceptors. Undetectable in the inner plexiform layers and the inner nuclear layer.

Its subcellular location is the secreted. The protein localises to the cell membrane. Binds negatively charged membrane lipids, such as phosphatidylserine and phosphoinositides. May play a role in cell-cell adhesion processes in the retina, via homomeric interaction between octamers present on the surface of two neighboring cells. Required for normal structure and function of the retina. This is Retinoschisin (Rs1) from Mus musculus (Mouse).